Here is a 149-residue protein sequence, read N- to C-terminus: Ribosome biogenesis protein ALB1 (149 aa).

The tract at residues 1 to 58 (MAGRNAINKPKIKMLAQSHARSLSRKRAARSSVQTRSSTSRYASKSLTAPRPTDSKSL) is disordered. Over residues 30-41 (RSSVQTRSSTSR) the composition is skewed to low complexity.

This sequence belongs to the ALB1 family. Component of the nucleoplasmic and cytoplasmic pre-60S ribosomal particles.

It localises to the cytoplasm. The protein localises to the nucleus. Its function is as follows. Involved in proper assembly of pre-ribosomal particles during the biogenesis of the 60S ribosomal subunit. Accompanies the pre-60S particles to the cytoplasm. The chain is Ribosome biogenesis protein ALB1 (ALB1) from Lodderomyces elongisporus (strain ATCC 11503 / CBS 2605 / JCM 1781 / NBRC 1676 / NRRL YB-4239) (Yeast).